The following is a 488-amino-acid chain: MSTPGVNSSASLSPDRLNSPVTIPAVMFIFGVVGNLVAIVVLCKSRKEQKETTFYTLVCGLAVTDLLGTLLVSPVTIATYMKGQWPGGQPLCEYSTFILLFFSLSGLSIICAMSVERYLAINHAYFYSHYVDKRLAGLTLFAVYASNVLFCALPNMGLGSSRLQYPDTWCFIDWTTNVTAHAAYSYMYAGFSSFLILATVLCNVLVCGALLRMHRQFMRRTSLGTEQHHAAAAASVASRGHPAASPALPRLSDFRRRRSFRRIAGAEIQMVILLIATSLVVLICSIPLVVRVFVNQLYQPSLEREVSKNPDLQAIRIASVNPILDPWIYILLRKTVLSKAIEKIKCLFCRIGGSRRERSGQHCSDSQRTSSAMSGHSRSFISRELKEISSTSQTLLPDLSLPDLSENGLGGRNLLPGVPGMGLAQEDTTSLRTLRISETSDSSQGQDSESVLLVDEAGGSGRAGPAPKGSSLQVTFPSETLNLSEKCI.

The Extracellular segment spans residues 1–19 (MSTPGVNSSASLSPDRLNS). Asn-7 carries an N-linked (GlcNAc...) asparagine glycan. Residues 20–43 (PVTIPAVMFIFGVVGNLVAIVVLC) form a helical membrane-spanning segment. The Cytoplasmic portion of the chain corresponds to 44–55 (KSRKEQKETTFY). The chain crosses the membrane as a helical span at residues 56–79 (TLVCGLAVTDLLGTLLVSPVTIAT). The Extracellular segment spans residues 80–96 (YMKGQWPGGQPLCEYST). A disulfide bridge connects residues Cys-92 and Cys-170. Residues 97–115 (FILLFFSLSGLSIICAMSV) traverse the membrane as a helical segment. Residues 116–135 (ERYLAINHAYFYSHYVDKRL) are Cytoplasmic-facing. Residues 136–160 (AGLTLFAVYASNVLFCALPNMGLGS) form a helical membrane-spanning segment. The Extracellular segment spans residues 161-184 (SRLQYPDTWCFIDWTTNVTAHAAY). Residues 185–211 (SYMYAGFSSFLILATVLCNVLVCGALL) traverse the membrane as a helical segment. Residues 212–267 (RMHRQFMRRTSLGTEQHHAAAAASVASRGHPAASPALPRLSDFRRRRSFRRIAGAE) are Cytoplasmic-facing. The helical transmembrane segment at 268–295 (IQMVILLIATSLVVLICSIPLVVRVFVN) threads the bilayer. Topologically, residues 296-312 (QLYQPSLEREVSKNPDL) are extracellular. Residues 313–332 (QAIRIASVNPILDPWIYILL) form a helical membrane-spanning segment. The Cytoplasmic segment spans residues 333–488 (RKTVLSKAIE…ETLNLSEKCI (156 aa)). The interval 356-376 (RERSGQHCSDSQRTSSAMSGH) is disordered. Residues 361–376 (QHCSDSQRTSSAMSGH) show a composition bias toward polar residues. Phosphoserine is present on residues Ser-374, Ser-377, Ser-379, and Ser-382. The span at 437–449 (SETSDSSQGQDSE) shows a compositional bias: polar residues. Positions 437-475 (SETSDSSQGQDSESVLLVDEAGGSGRAGPAPKGSSLQVT) are disordered.

The protein belongs to the G-protein coupled receptor 1 family. In terms of assembly, interacts with FEM1A. In terms of processing, phosphorylation mediates agonist-mediated desensitization by promoting cytoplasmic retention. In terms of tissue distribution, high in intestine and in peripheral blood mononuclear cells; low in lung, kidney, thymus, uterus, vasculature and brain. Not found in liver, heart, retina oe skeletal muscle.

It is found in the cell membrane. Receptor for prostaglandin E2 (PGE2). The activity of this receptor is mediated by G(s) proteins that stimulate adenylate cyclase. Has a relaxing effect on smooth muscle. May play an important role in regulating renal hemodynamics, intestinal epithelial transport, adrenal aldosterone secretion, and uterine function. The sequence is that of Prostaglandin E2 receptor EP4 subtype (PTGER4) from Homo sapiens (Human).